Reading from the N-terminus, the 724-residue chain is MLDPTSERDLFDQENMEEISQLASLEMSGDVVANTNSTVVLEKPSYPDSVYVTAANIFQGIRIQRSPDKVIINYGSEPLQPSSSRSEDESFQRLSYELAFSTLKYQDILESILIDSYIFSSTTIASQLNSLIIVMLYDFQDRKFQPRILSENEETIPEVQEVENLLNGFKTKLAAALARCRIKHDALSIYHILPETVRKQEQRASTLPLYAWINTSKISLEEVYNNLRRKGYSKVKSITSVNEKVYAVDQHCFNVLIFPAHLKTDLLNIDLIKDYKLIFQDKSRSLAVHSVKALINIDDDVLMVNTGSWYTVAHMSILTSGHTSKIFVCGIQQEEKDFNARKLFTRMGCQNIEILHETFLSIESKDHRLQNVKVILLLPRCSSLGVSNPVEFILNEHEDKSLLQDLSQGGLPKDKLETLVQQQFEQLTHAMKFTKVQAIVYCTCSVSKEENEDVVEKALEYQSSGVKMQPYRLSPPVLPLCTLKEIELSMDRFFRLEPSDMNNGCFLSILTRERDPSETVSVKDVLARAAAKGLLEGVEVGKTLKRDKKRKKSKALPSRAPHHGDPLRDHLAVDGNDTSNVQMKISELLHRESKISTSTKMSAPAKTVSQAGTSSQVRKPSKPLSTPLVRNFSRPVERPTNFVRARPEGKVIPLKPIEIVLPPVIFPLSSQGPRVQMPATHFYYRFIGSKVGVPRYLTSSTSRRKEKVKESTTSSHVRHPRPWL.

Cys-444 serves as the catalytic Nucleophile. 3 disordered regions span residues Lys-542–Asp-574, Ile-595–Val-629, and Thr-698–Leu-724. Residues Thr-543–Lys-554 are compositionally biased toward basic residues. The span at His-562–Ala-572 shows a compositional bias: basic and acidic residues. The segment covering Ile-595–Arg-618 has biased composition (polar residues).

This sequence belongs to the class I-like SAM-binding methyltransferase superfamily. RsmB/NOP family. In terms of tissue distribution, expressed in testis.

In terms of biological role, may have S-adenosyl-L-methionine-dependent methyl-transferase activity. This chain is Putative methyltransferase NSUN7 (Nsun7), found in Mus musculus (Mouse).